A 383-amino-acid chain; its full sequence is uncharacterized protein (383 aa).

Transmembrane regions (helical) follow at residues 25-45 (LWVALCIVIGIALGKLLPAVA), 53-73 (IYNVSIPIAICLFFMMYPIMV), 103-123 (FTMVIFAQFFLGYLFAPLLTA), 139-159 (IAGCILLGIAPCTAMVLMWGY), 166-186 (GLTLVMVAVNSLAMLFLYAPL), 200-220 (WQTIVLSVLIYVGLPLAAGIY), 238-258 (FLHYLSPIAIVALLLTLILLF), 272-292 (IFLIAVPLFIQTNFIFLITYV), 309-329 (LIGASNHFEVAIATAVMLFGL), and 332-352 (GAALATVVGVLIEVPVMLMLV).

The protein belongs to the arsenical resistance-3 (ACR3) (TC 2.A.59) family.

The protein localises to the cell membrane. This is an uncharacterized protein from Synechocystis sp. (strain ATCC 27184 / PCC 6803 / Kazusa).